Here is a 162-residue protein sequence, read N- to C-terminus: UPF0260 protein CC_3276 (162 aa).

Belongs to the UPF0260 family.

The protein is UPF0260 protein CC_3276 of Caulobacter vibrioides (strain ATCC 19089 / CIP 103742 / CB 15) (Caulobacter crescentus).